Here is a 927-residue protein sequence, read N- to C-terminus: UPF0182 protein bll7333 (927 aa).

Helical transmembrane passes span alanine 17–leucine 37, alanine 65–leucine 85, leucine 134–tyrosine 154, tryptophan 185–glycine 205, valine 220–glycine 240, valine 264–tryptophan 284, and alanine 297–phenylalanine 317.

This sequence belongs to the UPF0182 family.

Its subcellular location is the cell membrane. The sequence is that of UPF0182 protein bll7333 from Bradyrhizobium diazoefficiens (strain JCM 10833 / BCRC 13528 / IAM 13628 / NBRC 14792 / USDA 110).